We begin with the raw amino-acid sequence, 417 residues long: Tyrosine--tRNA ligase (417 aa).

Y39 lines the L-tyrosine pocket. A 'HIGH' region motif is present at residues 44 to 53 (CTAPSLHVGH). Residues Y176 and Q180 each contribute to the L-tyrosine site. The 'KMSKS' region motif lies at 236–240 (KMGKT). An ATP-binding site is contributed by K239. The S4 RNA-binding domain maps to 350–417 (AGVLALFVKA…KKRHVLLRPA (68 aa)).

Belongs to the class-I aminoacyl-tRNA synthetase family. TyrS type 1 subfamily. In terms of assembly, homodimer.

Its subcellular location is the cytoplasm. It carries out the reaction tRNA(Tyr) + L-tyrosine + ATP = L-tyrosyl-tRNA(Tyr) + AMP + diphosphate + H(+). Catalyzes the attachment of tyrosine to tRNA(Tyr) in a two-step reaction: tyrosine is first activated by ATP to form Tyr-AMP and then transferred to the acceptor end of tRNA(Tyr). This is Tyrosine--tRNA ligase from Nitrobacter winogradskyi (strain ATCC 25391 / DSM 10237 / CIP 104748 / NCIMB 11846 / Nb-255).